A 307-amino-acid chain; its full sequence is Serine/threonine-protein phosphatase 4 catalytic subunit (307 aa).

A2 is modified (N-acetylalanine). D54, H56, D82, and N114 together coordinate Mn(2+). The active-site Proton donor is H115. 2 residues coordinate Mn(2+): H164 and H238. L307 carries the leucine methyl ester modification.

Belongs to the PPP phosphatase family. PP-4 (PP-X) subfamily. Serine/threonine-protein phosphatase 4 (PP4) occurs in different assemblies of the catalytic and one or more regulatory subunits. Component of the PP4 complexes PPP4C-PPP4R1, PPP4C-PPP4R2, PPP4C-PPP4R2-PPP4R3A, PPP4C-PPP4R2-PPP4R3B and PPP4C-PPP4R4. The PPP4C-PPP4R2 complex appears to be a tetramer composed of 2 molecules of PPP4C and 2 molecules of PPP4R2. Interacts with REL, NFKB1/p50 and RELA. Interacts with SMN1 and GEMIN4. Interacts with IRS4 (phosphorylated). Interacts with SMEK1/PPP4R3A; the interaction requires PP4R2. Interacts with HDAC3. It depends on Mn(2+) as a cofactor. Post-translationally, methylation at the C-terminal Leu-307 is critical for interactions with regulatory subunits and functions in DNA repair.

It is found in the cytoplasm. Its subcellular location is the nucleus. It localises to the cytoskeleton. The protein localises to the microtubule organizing center. The protein resides in the centrosome. It carries out the reaction O-phospho-L-seryl-[protein] + H2O = L-seryl-[protein] + phosphate. It catalyses the reaction O-phospho-L-threonyl-[protein] + H2O = L-threonyl-[protein] + phosphate. Protein phosphatase that is involved in many processes such as microtubule organization at centrosomes, maturation of spliceosomal snRNPs, apoptosis, DNA repair, tumor necrosis factor (TNF)-alpha signaling, activation of c-Jun N-terminal kinase MAPK8, regulation of histone acetylation, DNA damage checkpoint signaling, NF-kappa-B activation and cell migration. The PPP4C-PPP4R1 PP4 complex may play a role in dephosphorylation and regulation of HDAC3. The PPP4C-PPP4R2-PPP4R3A PP4 complex specifically dephosphorylates H2AX phosphorylated on Ser-140 (gamma-H2AX) generated during DNA replication and required for DNA double strand break repair. Dephosphorylates NDEL1 at CDK1 phosphorylation sites and negatively regulates CDK1 activity in interphase. In response to DNA damage, catalyzes RPA2 dephosphorylation, an essential step for DNA repair since it allows the efficient RPA2-mediated recruitment of RAD51 to chromatin. This is Serine/threonine-protein phosphatase 4 catalytic subunit (PPP4C) from Homo sapiens (Human).